Here is a 363-residue protein sequence, read N- to C-terminus: Isopentenyl-diphosphate delta-isomerase (363 aa).

7–8 lines the substrate pocket; it reads RK. FMN contacts are provided by residues 71 to 73, serine 101, and asparagine 130; that span reads AMT. Glutamine 160 lines the substrate pocket. Glutamate 161 lines the Mg(2+) pocket. FMN contacts are provided by residues lysine 192, serine 217, threonine 222, 270 to 272, and 291 to 292; these read GIR and AG.

It belongs to the IPP isomerase type 2 family. As to quaternary structure, homooctamer. Dimer of tetramers. Requires FMN as cofactor. NADPH serves as cofactor. Mg(2+) is required as a cofactor.

The protein localises to the cytoplasm. The enzyme catalyses isopentenyl diphosphate = dimethylallyl diphosphate. Functionally, involved in the biosynthesis of isoprenoids. Catalyzes the 1,3-allylic rearrangement of the homoallylic substrate isopentenyl (IPP) to its allylic isomer, dimethylallyl diphosphate (DMAPP). This is Isopentenyl-diphosphate delta-isomerase from Symbiobacterium thermophilum (strain DSM 24528 / JCM 14929 / IAM 14863 / T).